Here is a 792-residue protein sequence, read N- to C-terminus: Endonuclease MutS2 (792 aa).

G335–T342 lines the ATP pocket. One can recognise a Smr domain in the interval V717–K792.

Belongs to the DNA mismatch repair MutS family. MutS2 subfamily. Homodimer. Binds to stalled ribosomes, contacting rRNA.

Endonuclease that is involved in the suppression of homologous recombination and thus may have a key role in the control of bacterial genetic diversity. Its function is as follows. Acts as a ribosome collision sensor, splitting the ribosome into its 2 subunits. Detects stalled/collided 70S ribosomes which it binds and splits by an ATP-hydrolysis driven conformational change. Acts upstream of the ribosome quality control system (RQC), a ribosome-associated complex that mediates the extraction of incompletely synthesized nascent chains from stalled ribosomes and their subsequent degradation. Probably generates substrates for RQC. The polypeptide is Endonuclease MutS2 (Clostridioides difficile (strain 630) (Peptoclostridium difficile)).